Reading from the N-terminus, the 108-residue chain is Urease subunit gamma (108 aa).

It belongs to the urease gamma subunit family. In terms of assembly, heterotrimer of UreA (gamma), UreB (beta) and UreC (alpha) subunits. Three heterotrimers associate to form the active enzyme.

Its subcellular location is the cytoplasm. It catalyses the reaction urea + 2 H2O + H(+) = hydrogencarbonate + 2 NH4(+). It functions in the pathway nitrogen metabolism; urea degradation; CO(2) and NH(3) from urea (urease route): step 1/1. The sequence is that of Urease subunit gamma from Haloquadratum walsbyi (strain DSM 16790 / HBSQ001).